An 84-amino-acid chain; its full sequence is Small ribosomal subunit protein bS16 (84 aa).

This sequence belongs to the bacterial ribosomal protein bS16 family.

In Deinococcus radiodurans (strain ATCC 13939 / DSM 20539 / JCM 16871 / CCUG 27074 / LMG 4051 / NBRC 15346 / NCIMB 9279 / VKM B-1422 / R1), this protein is Small ribosomal subunit protein bS16.